The following is a 287-amino-acid chain: 3-methyl-2-oxobutanoate hydroxymethyltransferase (287 aa).

Mg(2+) contacts are provided by Asp57 and Asp96. 3-methyl-2-oxobutanoate-binding positions include 57–58 (DS), Asp96, and Lys125. Residue Glu127 coordinates Mg(2+). Catalysis depends on Glu194, which acts as the Proton acceptor.

It belongs to the PanB family. Homodecamer; pentamer of dimers. Mg(2+) serves as cofactor.

It localises to the cytoplasm. The catalysed reaction is 3-methyl-2-oxobutanoate + (6R)-5,10-methylene-5,6,7,8-tetrahydrofolate + H2O = 2-dehydropantoate + (6S)-5,6,7,8-tetrahydrofolate. The protein operates within cofactor biosynthesis; (R)-pantothenate biosynthesis; (R)-pantoate from 3-methyl-2-oxobutanoate: step 1/2. In terms of biological role, catalyzes the reversible reaction in which hydroxymethyl group from 5,10-methylenetetrahydrofolate is transferred onto alpha-ketoisovalerate to form ketopantoate. This is 3-methyl-2-oxobutanoate hydroxymethyltransferase from Methylobacterium sp. (strain 4-46).